The following is a 440-amino-acid chain: Aclacinomycin-T 2-deoxy-L-fucose transferase (440 aa).

It carries out the reaction dTDP-2-deoxy-beta-L-fucose + aclacinomycin T = aclacinomycin S + dTDP + H(+). In terms of biological role, involved in the biosynthesis of the trisaccharide moiety characteristic of the antitumor drug aclacinomycins. In the first reaction, AknK catalyzes the transfer of 2-deoxy-beta-L-fucose from the activated donor dTDP-2-deoxy-beta-L-fucose to the mono-glycosylated aclacinomycin T (rhodosaminyl aklavinone), forming the di-glycosylated aclacinomycin S (L-2-deoxyfucosyl-L-rhodosaminyl aklavinone). It can also catalyze the addition of an alternate dTDP-L-sugar, dTDP-L-daunosamine, to aclacinomycin T and the addition of 2-deoxy-beta-L-fucose to the mono-glycosylated aglycones (monoglycosylated anthracyclines) such as daunomycin (daunorubicin), adriamycin (doxorubicin) and idarubicin. In vitro, AknK also catalyzes the addition of a second L-2-deoxyfucosyl moiety from dTDP-2-deoxy-beta-L-fucose, albeit with reduced activity, to the natural disaccharide chain of aclacinomycin S to produce L-deoxyfucosyl-L-deoxyfucosyl-L-rhodosaminyl aklavinone (2-deoxy-alpha-D-fucosyl-aclacinomycin S), a variant of the natural aclacinomycin A. This is Aclacinomycin-T 2-deoxy-L-fucose transferase from Streptomyces galilaeus.